Reading from the N-terminus, the 255-residue chain is Small ribosomal subunit protein uS2 (255 aa).

The segment at 230–255 is disordered; sequence QSSSGRDLGASSEVPVEPALEEAAEG.

Belongs to the universal ribosomal protein uS2 family.

This chain is Small ribosomal subunit protein uS2, found in Rhizobium etli (strain CIAT 652).